We begin with the raw amino-acid sequence, 317 residues long: Ribosomal RNA small subunit methyltransferase H (317 aa).

Residues 39 to 41 (GGH), D59, F83, D104, and Q111 contribute to the S-adenosyl-L-methionine site.

This sequence belongs to the methyltransferase superfamily. RsmH family.

It is found in the cytoplasm. It carries out the reaction cytidine(1402) in 16S rRNA + S-adenosyl-L-methionine = N(4)-methylcytidine(1402) in 16S rRNA + S-adenosyl-L-homocysteine + H(+). Its function is as follows. Specifically methylates the N4 position of cytidine in position 1402 (C1402) of 16S rRNA. This is Ribosomal RNA small subunit methyltransferase H from Paraburkholderia phymatum (strain DSM 17167 / CIP 108236 / LMG 21445 / STM815) (Burkholderia phymatum).